The primary structure comprises 402 residues: MTMFMPTPSQFDPDERGHFGKFGGRFVPETLMPALLELESAYNELRFDREFWSEVDYYLKEYVGRPSPLYYAERLSDELGAKIYLKREDLNHTGAHKINNTVIQGLLAKRLGKKKIIAETGAGQHGVATATIAALLGLECEVFMGSKDTARQELNVFRMKLLSSKVQSVESGSKTLKDAMNEAIRHWVTHARDTFYIIGTVAGPHPYPMMVRDFQSVISFEAKKQILEKEERLPDYVIACIGGGSNAAGMFARFLDEESVRCIGIEAGGLGIESHHHGASLAKGSPGILHGQMSYLLQDSEGQIEEAYSISAGLDYPGIGPEHAYLFESGAAEYDHVTDAEALEAFVWLSQKEGIIPAFESAHAIAYLKKARERFKDKVVIVSLSGRGDKDMIQAKNLLNFH.

Position 97 is an N6-(pyridoxal phosphate)lysine (K97).

The protein belongs to the TrpB family. Tetramer of two alpha and two beta chains. Requires pyridoxal 5'-phosphate as cofactor.

It catalyses the reaction (1S,2R)-1-C-(indol-3-yl)glycerol 3-phosphate + L-serine = D-glyceraldehyde 3-phosphate + L-tryptophan + H2O. It participates in amino-acid biosynthesis; L-tryptophan biosynthesis; L-tryptophan from chorismate: step 5/5. Functionally, the beta subunit is responsible for the synthesis of L-tryptophan from indole and L-serine. The sequence is that of Tryptophan synthase beta chain 2 (trpB2) from Wolinella succinogenes (strain ATCC 29543 / DSM 1740 / CCUG 13145 / JCM 31913 / LMG 7466 / NCTC 11488 / FDC 602W) (Vibrio succinogenes).